The sequence spans 181 residues: HGPRTase-like protein 1 (181 aa).

The protein belongs to the purine/pyrimidine phosphoribosyltransferase family. Archaeal HPRT subfamily.

May catalyze a purine salvage reaction, the substrate is unknown. This chain is HGPRTase-like protein 1, found in Halalkalicoccus jeotgali (strain DSM 18796 / CECT 7217 / JCM 14584 / KCTC 4019 / B3).